The chain runs to 207 residues: Uracil phosphoribosyltransferase (207 aa).

5-phospho-alpha-D-ribose 1-diphosphate contacts are provided by residues Arg-77, Arg-102, and 129 to 137 (DPMLATGGS). Uracil contacts are provided by residues Ile-192 and 197–199 (GDA). Asp-198 serves as a coordination point for 5-phospho-alpha-D-ribose 1-diphosphate.

It belongs to the UPRTase family. Mg(2+) is required as a cofactor.

It catalyses the reaction UMP + diphosphate = 5-phospho-alpha-D-ribose 1-diphosphate + uracil. It functions in the pathway pyrimidine metabolism; UMP biosynthesis via salvage pathway; UMP from uracil: step 1/1. Allosterically activated by GTP. In terms of biological role, catalyzes the conversion of uracil and 5-phospho-alpha-D-ribose 1-diphosphate (PRPP) to UMP and diphosphate. The sequence is that of Uracil phosphoribosyltransferase from Ureaplasma parvum serovar 3 (strain ATCC 27815 / 27 / NCTC 11736).